A 2176-amino-acid chain; its full sequence is Nipped-B-like protein scc-2 (2176 aa).

Residues 1-25 (MDPNNLQNSLNGTGNPNFQPVQTNA) show a composition bias toward polar residues. Disordered stretches follow at residues 1-27 (MDPNNLQNSLNGTGNPNFQPVQTNAGG), 150-170 (PIPQHTIPPSTSNQFQQQIQS), 464-483 (SEATQSSSVTMNHHDVDEEG), 495-514 (MMSVGKAPKAGGGGGQNQRK), 523-551 (YDSLTDNFVPTDTGRRGRRRGRGSDDDED), 585-615 (QHFFGSQKKRRKEDRIRKDRSPTPEDVIESR), and 669-708 (DSLDTELKMPKNKKRRSGGDHHHKGDENSDESDEEEEMDE). Over residues 464–473 (SEATQSSSVT) the composition is skewed to low complexity. Composition is skewed to basic and acidic residues over residues 597-615 (EDRIRKDRSPTPEDVIESR) and 685-695 (SGGDHHHKGDE). The segment covering 696 to 708 (NSDESDEEEEMDE) has biased composition (acidic residues). HEAT repeat units follow at residues 1280–1312 (DTYLKHIVFGAGSETIVALRSKALKCLSSIIEA), 1320–1351 (EDVQQAVHTRMVDSHAQVRESAVELIGRFVLY), 1353–1388 (EEYVRKYYSQIAERILDTGVAVRKRVIRIMREICEK), 1393–1426 (EMIPDMLARMIRRVTDEEGVKKLVFETFTTLWFQ), 1692–1723 (EKVFITLEFFSRYHKGGLRQKALTAMGHFCAQ), 1803–1834 (QKYWKAVLESYVDADIQLRRAAVQVVWLTLNQ), and 1840–1871 (GASIPTLIAMTTDPVDVIRNRIDILLKEIDSK). Residues 2149–2176 (ITAANDDYDEEEDGGEDSRGPIMEQMEH) are disordered. Over residues 2154–2163 (DDYDEEEDGG) the composition is skewed to acidic residues.

Belongs to the SCC2/Nipped-B family. As to quaternary structure, may heterodimerize with mau-2/SCC4 to form the cohesin loading complex.

It is found in the nucleus. The protein resides in the chromosome. Functionally, plays an important role in the loading of the cohesin complex on to meiotic chromosomes. Forms a heterodimeric complex (also known as cohesin loading complex) with mau-2/SCC4 which mediates the loading of the cohesin complex onto chromatin. Plays an essential role in cell division during embryonic development. Promotes normal chromosome organization during meiosis. Required for the assembly of the synaptonemal complex between homologous chromosomes to promote sister chromatid cohesion during meiosis. Required for chromosome segregation during mitosis and meiosis. Plays a role in DNA double-strand break (DSB) repair during meiotic recombination and promotes the assembly of the 9-1-1 cell-cycle checkpoint response complex which is required for inducing apoptosis in response to DNA damage, at DNA damage sites. In Caenorhabditis elegans, this protein is Nipped-B-like protein scc-2.